The following is an 855-amino-acid chain: MVFTKSLLVLLWFLSCYTTTTSSALFNPPDNYLISCGSSQNITFQNRIFVPDSLHSSLVLKIGNSSVATSTTSNNSTNSIYQTARVFSSLASYRFKITSLGRHWIRLHFSPINNSTWNLTSASITVVTEDFVLLNNFSFNNFNGSYIFKEYTVNVTSEFLTLSFIPSNNSVVFVNAIEVVSVPDNLIPDQALALNPSTPFSGLSLLAFETVYRLNMGGPLLTSQNDTLGRQWDNDAEYLHVNSSVLVVTANPSSIKYSPSVTQETAPNMVYATADTMGDANVASPSFNVTWVLPVDPDFRYFVRVHFCDIVSQALNTLVFNLYVNDDLALGSLDLSTLTNGLKVPYFKDFISNGSVESSGVLTVSVGPDSQADITNATMNGLEVLKISNEAKSLSGVSSVKSLLPGGSGSKSKKKAVIIGSLVGAVTLILLIAVCCYCCLVASRKQRSTSPQEGGNGHPWLPLPLYGLSQTLTKSTASHKSATASCISLASTHLGRCFMFQEIMDATNKFDESSLLGVGGFGRVYKGTLEDGTKVAVKRGNPRSEQGMAEFRTEIEMLSKLRHRHLVSLIGYCDERSEMILVYEYMANGPLRSHLYGADLPPLSWKQRLEICIGAARGLHYLHTGASQSIIHRDVKTTNILLDENLVAKVADFGLSKTGPSLDQTHVSTAVKGSFGYLDPEYFRRQQLTEKSDVYSFGVVLMEVLCCRPALNPVLPREQVNIAEWAMAWQKKGLLDQIMDSNLTGKVNPASLKKFGETAEKCLAEYGVDRPSMGDVLWNLEYALQLEETSSALMEPDDNSTNHIPGIPMAPMEPFDNSMSIIDRGGVNSGTGTDDDAEDATTSAVFSQLVHPRGR.

An N-terminal signal peptide occupies residues 1–22 (MVFTKSLLVLLWFLSCYTTTTS). At 23 to 415 (SALFNPPDNY…GGSGSKSKKK (393 aa)) the chain is on the extracellular side. N-linked (GlcNAc...) asparagine glycosylation is found at Asn-41, Asn-64, Asn-75, Asn-114, Asn-118, Asn-136, Asn-143, Asn-154, Asn-168, Asn-225, Asn-242, Asn-288, Asn-353, and Asn-376. The helical transmembrane segment at 416-436 (AVIIGSLVGAVTLILLIAVCC) threads the bilayer. Over 437-855 (YCCLVASRKQ…FSQLVHPRGR (419 aa)) the chain is Cytoplasmic. In terms of domain architecture, Protein kinase spans 510-783 (FDESSLLGVG…GDVLWNLEYA (274 aa)). ATP contacts are provided by residues 516 to 524 (LGVGGFGRV) and Lys-538. Catalysis depends on Asp-634, which acts as the Proton acceptor. A disordered region spans residues 822–855 (IDRGGVNSGTGTDDDAEDATTSAVFSQLVHPRGR).

It belongs to the protein kinase superfamily. Ser/Thr protein kinase family. In terms of processing, autophosphorylated. In terms of tissue distribution, expressed in most vegetative tissues, including leaves, stems and roots, primarily in expanding cells and vascular tissue.

It localises to the cell membrane. In terms of biological role, receptor-like protein kinase required for cell elongation during vegetative growth, mostly in a brassinosteroid-(BR-) independent manner. Mediates the response of growing plant cells to the perturbation of cellulose synthesis and may act as a cell-wall-integrity sensor. Controls ectopic-lignin accumulation in cellulose-deficient mutant backgrounds. This is Receptor-like protein kinase THESEUS 1 (THE1) from Arabidopsis thaliana (Mouse-ear cress).